We begin with the raw amino-acid sequence, 250 residues long: Adenosylcobinamide-GDP ribazoletransferase (250 aa).

Helical transmembrane passes span Ile-33–Ile-53, Ile-63–Gly-83, Leu-109–Thr-129, Leu-137–Ile-157, Phe-180–Phe-200, and Ile-203–Gly-223.

This sequence belongs to the CobS family. Requires Mg(2+) as cofactor.

The protein localises to the cell membrane. The catalysed reaction is alpha-ribazole + adenosylcob(III)inamide-GDP = adenosylcob(III)alamin + GMP + H(+). It carries out the reaction alpha-ribazole 5'-phosphate + adenosylcob(III)inamide-GDP = adenosylcob(III)alamin 5'-phosphate + GMP + H(+). Its pathway is cofactor biosynthesis; adenosylcobalamin biosynthesis; adenosylcobalamin from cob(II)yrinate a,c-diamide: step 7/7. In terms of biological role, joins adenosylcobinamide-GDP and alpha-ribazole to generate adenosylcobalamin (Ado-cobalamin). Also synthesizes adenosylcobalamin 5'-phosphate from adenosylcobinamide-GDP and alpha-ribazole 5'-phosphate. This chain is Adenosylcobinamide-GDP ribazoletransferase, found in Thermoanaerobacter sp. (strain X514).